Here is a 376-residue protein sequence, read N- to C-terminus: Queuine tRNA-ribosyltransferase (376 aa).

Asp90 (proton acceptor) is an active-site residue. Substrate-binding positions include 90–94 (DSGGF), Asp144, Gln193, and Gly220. The segment at 251–257 (GVGTPED) is RNA binding. The Nucleophile role is filled by Asp270. Residues 275-279 (TRNAR) are RNA binding; important for wobble base 34 recognition. 4 residues coordinate Zn(2+): Cys308, Cys310, Cys313, and His339.

This sequence belongs to the queuine tRNA-ribosyltransferase family. Homodimer. Within each dimer, one monomer is responsible for RNA recognition and catalysis, while the other monomer binds to the replacement base PreQ1. Zn(2+) is required as a cofactor.

The enzyme catalyses 7-aminomethyl-7-carbaguanine + guanosine(34) in tRNA = 7-aminomethyl-7-carbaguanosine(34) in tRNA + guanine. It functions in the pathway tRNA modification; tRNA-queuosine biosynthesis. Functionally, catalyzes the base-exchange of a guanine (G) residue with the queuine precursor 7-aminomethyl-7-deazaguanine (PreQ1) at position 34 (anticodon wobble position) in tRNAs with GU(N) anticodons (tRNA-Asp, -Asn, -His and -Tyr). Catalysis occurs through a double-displacement mechanism. The nucleophile active site attacks the C1' of nucleotide 34 to detach the guanine base from the RNA, forming a covalent enzyme-RNA intermediate. The proton acceptor active site deprotonates the incoming PreQ1, allowing a nucleophilic attack on the C1' of the ribose to form the product. After dissociation, two additional enzymatic reactions on the tRNA convert PreQ1 to queuine (Q), resulting in the hypermodified nucleoside queuosine (7-(((4,5-cis-dihydroxy-2-cyclopenten-1-yl)amino)methyl)-7-deazaguanosine). The sequence is that of Queuine tRNA-ribosyltransferase from Cupriavidus taiwanensis (strain DSM 17343 / BCRC 17206 / CCUG 44338 / CIP 107171 / LMG 19424 / R1) (Ralstonia taiwanensis (strain LMG 19424)).